Reading from the N-terminus, the 284-residue chain is Orotidine 5'-phosphate decarboxylase (284 aa).

Residue lysine 95 is the Proton donor of the active site.

The protein belongs to the OMP decarboxylase family. Type 2 subfamily.

The enzyme catalyses orotidine 5'-phosphate + H(+) = UMP + CO2. It functions in the pathway pyrimidine metabolism; UMP biosynthesis via de novo pathway; UMP from orotate: step 2/2. This is Orotidine 5'-phosphate decarboxylase from Leptothrix cholodnii (strain ATCC 51168 / LMG 8142 / SP-6) (Leptothrix discophora (strain SP-6)).